The sequence spans 602 residues: ATP-dependent RNA helicase DeaD (602 aa).

Residues 6-34 (MTFSSFGLNSCIITALNDIGYVQPSPIQA) carry the Q motif motif. Positions 37-208 (IPYLIKGKDV…RRFMKNPKEI (172 aa)) constitute a Helicase ATP-binding domain. 50–57 (AQTGSGKT) provides a ligand contact to ATP. The short motif at 156 to 159 (DEAD) is the DEAD box element. The Helicase C-terminal domain occupies 231 to 378 (KTDALIRFLE…EVNLPKSDFL (148 aa)).

This sequence belongs to the DEAD box helicase family. DeaD/CsdA subfamily.

It localises to the cytoplasm. The enzyme catalyses ATP + H2O = ADP + phosphate + H(+). In terms of biological role, DEAD-box RNA helicase involved in various cellular processes at low temperature, including ribosome biogenesis, mRNA degradation and translation initiation. The polypeptide is ATP-dependent RNA helicase DeaD (Buchnera aphidicola subsp. Baizongia pistaciae (strain Bp)).